The chain runs to 1028 residues: Protein SMAX1-LIKE 5 (1028 aa).

One can recognise a Clp R domain in the interval 8-199 (IQQTLTTEAA…CVEDCSVSSV (192 aa)). Repeat regions lie at residues 12–102 (LTTE…LNRL) and 116–199 (LANA…VSSV). The EAR signature appears at 871–875 (LDLNI).

It belongs to the ClpA/ClpB family. Interacts probably with TPL/TPR in an EAR-motif dependent manner. In terms of tissue distribution, detected in roots, seedlings and axillary branches.

May function in a transcriptional corepressor complex. The chain is Protein SMAX1-LIKE 5 from Arabidopsis thaliana (Mouse-ear cress).